The chain runs to 32 residues: Cytochrome b6-f complex subunit 7 (32 aa).

Residues 9–27 (AAVFWVLIPVGLAGGALLL) traverse the membrane as a helical segment.

This sequence belongs to the PetM family. In terms of assembly, the 4 large subunits of the cytochrome b6-f complex are cytochrome b6, subunit IV (17 kDa polypeptide, PetD), cytochrome f and the Rieske protein, while the 4 small subunits are PetG, PetL, PetM and PetN. The complex functions as a dimer.

It is found in the cellular thylakoid membrane. In terms of biological role, component of the cytochrome b6-f complex, which mediates electron transfer between photosystem II (PSII) and photosystem I (PSI), cyclic electron flow around PSI, and state transitions. The chain is Cytochrome b6-f complex subunit 7 from Prochlorococcus marinus (strain MIT 9303).